A 149-amino-acid chain; its full sequence is SsrA-binding protein (149 aa).

It belongs to the SmpB family.

The protein localises to the cytoplasm. Its function is as follows. Required for rescue of stalled ribosomes mediated by trans-translation. Binds to transfer-messenger RNA (tmRNA), required for stable association of tmRNA with ribosomes. tmRNA and SmpB together mimic tRNA shape, replacing the anticodon stem-loop with SmpB. tmRNA is encoded by the ssrA gene; the 2 termini fold to resemble tRNA(Ala) and it encodes a 'tag peptide', a short internal open reading frame. During trans-translation Ala-aminoacylated tmRNA acts like a tRNA, entering the A-site of stalled ribosomes, displacing the stalled mRNA. The ribosome then switches to translate the ORF on the tmRNA; the nascent peptide is terminated with the 'tag peptide' encoded by the tmRNA and targeted for degradation. The ribosome is freed to recommence translation, which seems to be the essential function of trans-translation. This Thermosipho africanus (strain TCF52B) protein is SsrA-binding protein.